Here is a 58-residue protein sequence, read N- to C-terminus: Apelin receptor early endogenous ligand (58 aa).

Residues 1-22 form the signal peptide; that stretch reads MRFFHPLYLLLLLLTVLVLISA.

Belongs to the Elabela/Toddler family. In terms of assembly, interacts with aplnra and aplnrb. As to expression, expressed ubiquitously during late blastula and gastrula stages and becomes restricted to the lateral mesoderm, endoderm, and anterior and posterior notochord after gastrulation.

It localises to the secreted. Its subcellular location is the extracellular space. Its function is as follows. Peptide hormone that functions as endogenous ligand for the G-protein-coupled apelin receptor (aplnra and/or aplnrb), that plays a role in the regulation of normal cardiovascular function and fluid homeostasis. Functions as a balanced agonist activating both G(i) protein pathway and beta-arrestin pathway of APLNR. Downstream G proteins activation, apelin can inhibit cAMP production and activate key intracellular effectors such as ERKs. On the other hand, APLNR activation induces beta-arrestin recruitment to the membrane leading to desensitization and internalization of the receptor. Required for mesendodermal differentiation, blood vessels formation and heart morphogenesis during early development and for adult cardiovascular homeostasis. Acts as a motogen by promoting mesendodermal cell migration during gastrulation by binding and activating the apelin receptor. Acts as an early embryonic regulator of cellular movement with a role in migration and development of cardiac progenitor cells. May act as a chemoattractant for the activation of angioblast migration toward the embryonic midline, i.e. the position of the future vessel formation, during vasculogenesis. Positively regulates sinus venosus (SV)-derived endothelial cells migration into the developing heart to promote coronary blood vessel sprouting. Involved in cardioprotective functions during heart failure. Mediates myocardial contractility in an ERK1/2-dependent manner. The polypeptide is Apelin receptor early endogenous ligand (Danio rerio (Zebrafish)).